Consider the following 982-residue polypeptide: E3 ubiquitin-protein ligase CBL-B (982 aa).

The span at 1–14 shows a compositional bias: low complexity; that stretch reads MASSSSSSSSTNSS. The disordered stretch occupies residues 1 to 25; it reads MASSSSSSSSTNSSAVTGRLPGARS. The 4H stretch occupies residues 46 to 178; that stretch reads PPKQAAADRR…KAIFPSGQFQ (133 aa). Residues 46–354 enclose the Cbl-PTB domain; the sequence is PPKQAAADRR…GRSYNPDLTD (309 aa). The tract at residues 179–251 is EF-hand-like; it reads GDNFRITKAD…FEFDIFTRLF (73 aa). Positions 232, 234, 236, 238, and 243 each coordinate Ca(2+). Positions 252-354 are SH2-like; sequence QPWTSILRNW…GRSYNPDLTD (103 aa). Arg-297 lines the 4-O-phospho-L-tyrosine pocket. Residues 355–383 form a linker region; that stretch reads LCEPTPHDHIKVTQEQYELYCEMGSTFQL. An RING-type zinc finger spans residues 384 to 423; that stretch reads CKICAENDKDVKIEPCGHLMCTSCLTSWQESDGQGCPFCR. Disordered stretches follow at residues 480–582, 709–728, and 766–911; these read MNER…RTCR, VRNSAEEDDSEYKIPSSHPV, and LKQP…PVPR. Over residues 483–497 the composition is skewed to polar residues; the sequence is RQNSPVTSPGSSPLS. Residues 554–576 show a composition bias toward pro residues; that stretch reads LPAPPPPLREPPPPPERPPPIPP. Pro residues predominate over residues 825 to 834; sequence PSQPPPPPPA. The UBA domain maps to 927-970; it reads SLAENVDAKIAKLMGEGFPFEEVKRALEIAQNNVDVARSILREF.

As to quaternary structure, interacts with several SH3 domain-containing proteins and with poly-ubiquitinated proteins.

It localises to the cytoplasm. It catalyses the reaction S-ubiquitinyl-[E2 ubiquitin-conjugating enzyme]-L-cysteine + [acceptor protein]-L-lysine = [E2 ubiquitin-conjugating enzyme]-L-cysteine + N(6)-ubiquitinyl-[acceptor protein]-L-lysine.. It participates in protein modification; protein ubiquitination. Functionally, E3 ubiquitin-protein ligase which accepts ubiquitin from specific E2 ubiquitin-conjugating enzymes, and transfers it to substrates, generally promoting their degradation by the proteasome. This chain is E3 ubiquitin-protein ligase CBL-B (cblb), found in Xenopus tropicalis (Western clawed frog).